We begin with the raw amino-acid sequence, 152 residues long: Lipoprotein signal peptidase (152 aa).

3 consecutive transmembrane segments (helical) span residues 5–25 (LFVL…FWIV), 61–81 (WFFV…LATH), and 84–104 (LNIW…GNFI). Catalysis depends on residues Asp-114 and Asp-130. The helical transmembrane segment at 125-145 (IFNVADSYLTVGVILLVICLW) threads the bilayer.

The protein belongs to the peptidase A8 family.

The protein localises to the cell membrane. The enzyme catalyses Release of signal peptides from bacterial membrane prolipoproteins. Hydrolyzes -Xaa-Yaa-Zaa-|-(S,diacylglyceryl)Cys-, in which Xaa is hydrophobic (preferably Leu), and Yaa (Ala or Ser) and Zaa (Gly or Ala) have small, neutral side chains.. The protein operates within protein modification; lipoprotein biosynthesis (signal peptide cleavage). This protein specifically catalyzes the removal of signal peptides from prolipoproteins. The protein is Lipoprotein signal peptidase of Streptococcus pyogenes serotype M2 (strain MGAS10270).